A 377-amino-acid polypeptide reads, in one-letter code: 3-dehydroquinate synthase (377 aa).

NAD(+) contacts are provided by residues 113–117 (GVIGD), 137–138 (TT), lysine 150, and lysine 159. 3 residues coordinate Zn(2+): glutamate 192, histidine 254, and histidine 273.

The protein belongs to the sugar phosphate cyclases superfamily. Dehydroquinate synthase family. Co(2+) is required as a cofactor. Requires Zn(2+) as cofactor. The cofactor is NAD(+).

It is found in the cytoplasm. The enzyme catalyses 7-phospho-2-dehydro-3-deoxy-D-arabino-heptonate = 3-dehydroquinate + phosphate. Its pathway is metabolic intermediate biosynthesis; chorismate biosynthesis; chorismate from D-erythrose 4-phosphate and phosphoenolpyruvate: step 2/7. In terms of biological role, catalyzes the conversion of 3-deoxy-D-arabino-heptulosonate 7-phosphate (DAHP) to dehydroquinate (DHQ). This is 3-dehydroquinate synthase from Bartonella bacilliformis (strain ATCC 35685 / KC583 / Herrer 020/F12,63).